A 422-amino-acid chain; its full sequence is MEKEQETLRAWKDRVARELDRVVAFWLDHSHDQEQGGFFTCLGRDGQVYDDLKYVWLQGRQVWMYCRLYRQFERFRRPELLNAAKAGGEFLLRYAQVAPPAKKCAFVLTRDGRPVKVQRTIFSECFYTMAMNELWRVTGDARYQNEAMEMMDQIVSWVREDPSGLGRPQLPGAPASESMAVPMMLLNLVEQLGEADEELAGISAELGDWCAQRILQHVQRGGQAVLENVSEDGEELSGCLGRHQNPGHALEAGWFLLRYAIQRGDAKLRAHVIDKFLLLPFHSGWDPEHGGLFYFQDADGLCPTQLEWAMKLWWPHSEAMIAFLMGYSETGDPALLRIFYQVAEYTFHRFRDPEYGEWFGYLNRDGKVALTIKGGPFKGCFHVPRCLAMCEEMLNNLLSRLAPASALSTRSPPAGPTRPGAE.

The leucine-zipper stretch occupies residues Leu-185 to Leu-206.

The protein belongs to the N-acylglucosamine 2-epimerase family. Homodimer. Forms a heterodimer with renin and inhibits its activity.

The enzyme catalyses an N-acyl-D-glucosamine = an N-acyl-D-mannosamine. The protein operates within amino-sugar metabolism; N-acetylneuraminate degradation. Catalyzes the interconversion of N-acetylglucosamine to N-acetylmannosamine. Involved in the N-glycolylneuraminic acid (Neu5Gc) degradation pathway. This is N-acylglucosamine 2-epimerase (RENBP) from Bos taurus (Bovine).